Consider the following 130-residue polypeptide: Small ribosomal subunit protein uS9 (130 aa).

The segment at 98 to 130 (LKRAGFLTRDARKKERKKYGQPGARKRFQYSKR) is disordered. Residues 111–130 (KERKKYGQPGARKRFQYSKR) show a composition bias toward basic residues.

It belongs to the universal ribosomal protein uS9 family.

In Sorangium cellulosum (strain So ce56) (Polyangium cellulosum (strain So ce56)), this protein is Small ribosomal subunit protein uS9.